Here is a 188-residue protein sequence, read N- to C-terminus: UPF0301 protein Smlt1098 (188 aa).

Belongs to the UPF0301 (AlgH) family.

This chain is UPF0301 protein Smlt1098, found in Stenotrophomonas maltophilia (strain K279a).